A 302-amino-acid chain; its full sequence is Cell division protein FtsQ (302 aa).

Positions 1–41 (MPAVVRGGPPKPRRPRAEAPASPSKGKPAPRKAQPAAKLHA) are disordered. Topologically, residues 1–50 (MPAVVRGGPPKPRRPRAEAPASPSKGKPAPRKAQPAAKLHAARGVGLSPT) are cytoplasmic. Over residues 18–38 (EAPASPSKGKPAPRKAQPAAK) the composition is skewed to low complexity. Residues 51–71 (VALSVAGAALGLGLVVMLATG) traverse the membrane as a helical segment. The Periplasmic portion of the chain corresponds to 72–302 (HRAERLGASM…LPGQPAADGA (231 aa)). A POTRA domain is found at 94-162 (FRLKTVHIRG…DTVLIAVEER (69 aa)).

Belongs to the FtsQ/DivIB family. FtsQ subfamily.

It is found in the cell inner membrane. In terms of biological role, essential cell division protein. The polypeptide is Cell division protein FtsQ (Caulobacter vibrioides (strain ATCC 19089 / CIP 103742 / CB 15) (Caulobacter crescentus)).